The following is a 122-amino-acid chain: Allatotropin (122 aa).

The signal sequence occupies residues 1-23; it reads MRVILAITLLFVAGSFIATASKG. The propeptide occupies 24–40; the sequence is RNYPRFFKHRMKLREIR. Residue Phe-53 is modified to Phenylalanine amide. A propeptide spanning residues 57–122 is cleaved from the precursor; the sequence is ESPAERIPDL…GDDSKKGTIA (66 aa).

In terms of tissue distribution, expressed in brain and ventral ganglia but not in the retrocerebral complex (at protein level).

Its subcellular location is the secreted. Neuropeptide stimulator of juvenile hormone synthesis. This is Allatotropin from Camponotus floridanus (Florida carpenter ant).